Reading from the N-terminus, the 67-residue chain is Protein AaeX (67 aa).

A run of 2 helical transmembrane segments spans residues 10–30 (FGLSFPPVFFVLMVSLTLFFV) and 43–63 (FVWHPALFNSALFCCLFYLLF).

The protein belongs to the AaeX family.

It is found in the cell membrane. The sequence is that of Protein AaeX from Pectobacterium atrosepticum (strain SCRI 1043 / ATCC BAA-672) (Erwinia carotovora subsp. atroseptica).